Here is a 394-residue protein sequence, read N- to C-terminus: Multidrug resistance protein D (394 aa).

The Cytoplasmic segment spans residues 1 to 8 (MKRQRNVN). The helical transmembrane segment at 9 to 29 (LLLMLVLLVAVGQMAQTIYIP) threads the bilayer. Topologically, residues 30 to 46 (AIADMARDLNVREGAVQ) are periplasmic. Residues 47–67 (SVMGAYLLTYGVSQLFYGPIS) form a helical membrane-spanning segment. The Cytoplasmic segment spans residues 68–73 (DRVGRR). The chain crosses the membrane as a helical span at residues 74-94 (PVILVGMSIFMLATLVAVTTS). Residue Ser-95 is a topological domain, periplasmic. A helical membrane pass occupies residues 96-116 (LTVLIAASAMQGMGTGVGGVM). The Cytoplasmic portion of the chain corresponds to 117–134 (ARTLPRDLYERTQLRHAN). Residues 135–155 (SLLNMGILVSPLLAPLIGGLL) traverse the membrane as a helical segment. Topologically, residues 156–162 (DTMWNWR) are periplasmic. Residues 163 to 183 (ACYLFLLVLCAGVTFSMARWM) form a helical membrane-spanning segment. Residues 184 to 212 (PETRPVDAPRTRLLTSYKTLFGNSGFNCY) are Cytoplasmic-facing. Residues 213–233 (LLMLIGGLAGIAAFEACSGVL) traverse the membrane as a helical segment. Residues 234–242 (MGAVLGLSS) lie on the Periplasmic side of the membrane. Residues 243–263 (MTVSILFILPIPAAFFGAWFA) traverse the membrane as a helical segment. Over 264–276 (GRPNKRFSTLMWQ) the chain is Cytoplasmic. A helical transmembrane segment spans residues 277–297 (SVICCLLAGLLMWIPDWFGVM). Residue Asn-298 is a topological domain, periplasmic. The chain crosses the membrane as a helical span at residues 299–319 (VWTLLVPAALFFFGAGMLFPL). Residues 320–329 (ATSGAMEPFP) lie on the Cytoplasmic side of the membrane. The helical transmembrane segment at 330–350 (FLAGTAGALVGGLQNIGSGVL) threads the bilayer. Residues 351 to 364 (ASLSAMLPQTGQGS) are Periplasmic-facing. Residues 365–385 (LGLLMTLMGLLIVLCWLPLAT) form a helical membrane-spanning segment. The Cytoplasmic portion of the chain corresponds to 386–394 (RMSHQGQPV).

It belongs to the major facilitator superfamily.

The protein resides in the cell inner membrane. In terms of biological role, multidrug resistance pump that participates in a low energy shock adaptive response. This chain is Multidrug resistance protein D (emrD), found in Escherichia coli (strain K12).